We begin with the raw amino-acid sequence, 245 residues long: 4-hydroxy-tetrahydrodipicolinate reductase (245 aa).

NAD(+) is bound by residues 7-12, 75-77, and 102-105; these read GAKGKV, GTT, and APNF. The active-site Proton donor/acceptor is the histidine 132. Histidine 133 lines the (S)-2,3,4,5-tetrahydrodipicolinate pocket. Lysine 136 (proton donor) is an active-site residue. Residue 142 to 143 participates in (S)-2,3,4,5-tetrahydrodipicolinate binding; that stretch reads GT.

It belongs to the DapB family.

Its subcellular location is the cytoplasm. It carries out the reaction (S)-2,3,4,5-tetrahydrodipicolinate + NAD(+) + H2O = (2S,4S)-4-hydroxy-2,3,4,5-tetrahydrodipicolinate + NADH + H(+). The enzyme catalyses (S)-2,3,4,5-tetrahydrodipicolinate + NADP(+) + H2O = (2S,4S)-4-hydroxy-2,3,4,5-tetrahydrodipicolinate + NADPH + H(+). It participates in amino-acid biosynthesis; L-lysine biosynthesis via DAP pathway; (S)-tetrahydrodipicolinate from L-aspartate: step 4/4. Functionally, catalyzes the conversion of 4-hydroxy-tetrahydrodipicolinate (HTPA) to tetrahydrodipicolinate. The chain is 4-hydroxy-tetrahydrodipicolinate reductase from Mycobacterium marinum (strain ATCC BAA-535 / M).